Here is a 205-residue protein sequence, read N- to C-terminus: Imidazole glycerol phosphate synthase subunit HisH (205 aa).

One can recognise a Glutamine amidotransferase type-1 domain in the interval 3–205 (RIALLDYGMG…LLKNFVEWNI (203 aa)). The Nucleophile role is filled by Cys80. Active-site residues include His185 and Glu187.

In terms of assembly, heterodimer of HisH and HisF.

The protein resides in the cytoplasm. It carries out the reaction 5-[(5-phospho-1-deoxy-D-ribulos-1-ylimino)methylamino]-1-(5-phospho-beta-D-ribosyl)imidazole-4-carboxamide + L-glutamine = D-erythro-1-(imidazol-4-yl)glycerol 3-phosphate + 5-amino-1-(5-phospho-beta-D-ribosyl)imidazole-4-carboxamide + L-glutamate + H(+). It catalyses the reaction L-glutamine + H2O = L-glutamate + NH4(+). It participates in amino-acid biosynthesis; L-histidine biosynthesis; L-histidine from 5-phospho-alpha-D-ribose 1-diphosphate: step 5/9. In terms of biological role, IGPS catalyzes the conversion of PRFAR and glutamine to IGP, AICAR and glutamate. The HisH subunit catalyzes the hydrolysis of glutamine to glutamate and ammonia as part of the synthesis of IGP and AICAR. The resulting ammonia molecule is channeled to the active site of HisF. This Acinetobacter baylyi (strain ATCC 33305 / BD413 / ADP1) protein is Imidazole glycerol phosphate synthase subunit HisH.